The following is a 350-amino-acid chain: Protein-glutamate methylesterase/protein-glutamine glutaminase (350 aa).

Residues 5–122 (KVLCVDDSAL…RDGLIEYSEV (118 aa)) form the Response regulatory domain. Asp56 is modified (4-aspartylphosphate). Positions 152-346 (PFASSEKLVI…ERILTRLGDR (195 aa)) constitute a CheB-type methylesterase domain. Residues Ser165, His191, and Asp288 contribute to the active site.

It belongs to the CheB family. Post-translationally, phosphorylated by CheA. Phosphorylation of the N-terminal regulatory domain activates the methylesterase activity.

The protein resides in the cytoplasm. The catalysed reaction is [protein]-L-glutamate 5-O-methyl ester + H2O = L-glutamyl-[protein] + methanol + H(+). It catalyses the reaction L-glutaminyl-[protein] + H2O = L-glutamyl-[protein] + NH4(+). In terms of biological role, involved in chemotaxis. Part of a chemotaxis signal transduction system that modulates chemotaxis in response to various stimuli. Catalyzes the demethylation of specific methylglutamate residues introduced into the chemoreceptors (methyl-accepting chemotaxis proteins or MCP) by CheR. Also mediates the irreversible deamidation of specific glutamine residues to glutamic acid. In Bordetella pertussis (strain Tohama I / ATCC BAA-589 / NCTC 13251), this protein is Protein-glutamate methylesterase/protein-glutamine glutaminase.